The primary structure comprises 403 residues: Dynactin subunit 2 (403 aa).

A disordered region spans residues 1–26 (MADPKYADLPGIARNEPDVYETSDLP). Alanine 2 is subject to N-acetylalanine. At tyrosine 6 the chain carries Phosphotyrosine. Phosphoserine is present on serine 83. Tyrosine 86 is modified (phosphotyrosine). Positions 100 to 130 (QQKYQRLLHEVQELTTEVEKIKTTVKESATE) form a coiled coil. Residues threonine 134 and threonine 200 each carry the phosphothreonine modification. Positions 184 to 204 (TKNSKGTGSGGKTTSGTPPDS) are disordered. Positions 216–248 (EQDKFSQAAKVAELEKRLTELEATVRCDQDAQN) form a coiled coil. Serine 322 carries the post-translational modification Phosphoserine.

This sequence belongs to the dynactin subunit 2 family. As to quaternary structure, subunit of dynactin, a multiprotein complex part of a tripartite complex with dynein and a adapter, such as BICDL1, BICD2 or HOOK3. The dynactin complex is built around ACTR1A/ACTB filament and consists of an actin-related filament composed of a shoulder domain, a pointed end and a barbed end. Its length is defined by its flexible shoulder domain. The soulder is composed of 2 DCTN1 subunits, 4 DCTN2 and 2 DCTN3. The 4 DCNT2 (via N-terminus) bind the ACTR1A filament and act as molecular rulers to determine the length. The pointed end is important for binding dynein-dynactin cargo adapters and consists of 4 subunits: ACTR10, DCNT4, DCTN5 and DCTN6. The barbed end is composed of a CAPZA1:CAPZB heterodimers, which binds ACTR1A/ACTB filament and dynactin and stabilizes dynactin. Interacts with BICD2 and CEP135. Interacts with DYNAP. Interacts with ECPAS. Interacts with MAPRE1.

It localises to the cytoplasm. The protein resides in the cytoskeleton. The protein localises to the microtubule organizing center. It is found in the centrosome. Its subcellular location is the membrane. Part of the dynactin complex that activates the molecular motor dynein for ultra-processive transport along microtubules. In the dynactin soulder domain, binds the ACTR1A filament and acts as a molecular ruler to determine the length. Modulates cytoplasmic dynein binding to an organelle, and plays a role in prometaphase chromosome alignment and spindle organization during mitosis. Involved in anchoring microtubules to centrosomes. May play a role in synapse formation during brain development. This chain is Dynactin subunit 2 (DCTN2), found in Bos taurus (Bovine).